The sequence spans 155 residues: 3-hydroxyacyl-[acyl-carrier-protein] dehydratase FabZ (155 aa).

His-58 is an active-site residue.

Belongs to the thioester dehydratase family. FabZ subfamily.

The protein resides in the cytoplasm. The enzyme catalyses a (3R)-hydroxyacyl-[ACP] = a (2E)-enoyl-[ACP] + H2O. In terms of biological role, involved in unsaturated fatty acids biosynthesis. Catalyzes the dehydration of short chain beta-hydroxyacyl-ACPs and long chain saturated and unsaturated beta-hydroxyacyl-ACPs. The protein is 3-hydroxyacyl-[acyl-carrier-protein] dehydratase FabZ of Rhizobium etli (strain ATCC 51251 / DSM 11541 / JCM 21823 / NBRC 15573 / CFN 42).